Here is a 201-residue protein sequence, read N- to C-terminus: Phospholipase A2 inhibitor PIP (201 aa).

A signal peptide spans 1-19 (MKSLQTICLLFIFIARGTS). Cystine bridges form between Cys-22/Cys-46, Cys-25/Cys-32, Cys-39/Cys-67, Cys-73/Cys-94, Cys-95/Cys-100, Cys-118/Cys-143, Cys-136/Cys-165, and Cys-169/Cys-191. A glycan (N-linked (GlcNAc...) asparagine) is linked at Asn-157.

In terms of assembly, homohexamer. Post-translationally, glycosylated. In terms of tissue distribution, expressed by the liver.

Its subcellular location is the secreted. In terms of biological role, inhibits the enzymatic activity of phospholipase A2 (PA2). Binds to the major PLA2 toxin of D.russelli siamensis (Daboiatoxin, AC Q7T2R1, and AC Q7T3T5) at 1-2-fold molar excess of inhibitor to toxin. It exhibits broad spectra in neutralizing the toxicity of various snake venoms and toxins and inhibits the formation of edema in mice. May bind to PLA2 through its proline-rich hydrophobic core region. This chain is Phospholipase A2 inhibitor PIP, found in Malayopython reticulatus (Reticulate python).